Reading from the N-terminus, the 269-residue chain is Tryptophan synthase alpha chain (269 aa).

Active-site proton acceptor residues include Glu49 and Asp60.

This sequence belongs to the TrpA family. As to quaternary structure, tetramer of two alpha and two beta chains.

It catalyses the reaction (1S,2R)-1-C-(indol-3-yl)glycerol 3-phosphate + L-serine = D-glyceraldehyde 3-phosphate + L-tryptophan + H2O. Its pathway is amino-acid biosynthesis; L-tryptophan biosynthesis; L-tryptophan from chorismate: step 5/5. Its function is as follows. The alpha subunit is responsible for the aldol cleavage of indoleglycerol phosphate to indole and glyceraldehyde 3-phosphate. The chain is Tryptophan synthase alpha chain from Stutzerimonas stutzeri (strain A1501) (Pseudomonas stutzeri).